The chain runs to 2894 residues: uncharacterized protein (2894 aa).

The helical transmembrane segment at 8 to 28 (ISIFVFTILLLSNVSLGLNVS) threads the bilayer. 20 PbH1 repeats span residues 543–567 (EVRWYIENNTLYFYDDPIYGYDISL), 2085–2107 (NYPLYIDNLTINASGGYGISMLN), 2135–2156 (FGNITIYNITISSCNQGLVLYK), 2158–2180 (GNGIKLINSQIKNSVYEGVYSKN), 2201–2223 (ISSILVNNSLIYKNRYEGLLLEN), 2224–2244 (SSSSILNSNIMNNSIGIYLKE), 2245–2266 (NYISKIQKSNISYNAYGIEIVN), 2267–2289 (SSNVYINSSNIFNASTDGIAIFN), 2290–2311 (GENVSVENSLLYNNNYSILSYG), 2341–2363 (LNNLKLYNSSVLNSGSYGLFIYS), 2367–2389 (ASNVNISKSLINGSYKDGIYIYG), 2390–2419 (VNAINIVNNNITNNGLIGGDPAGSGIKISG), 2422–2444 (TKGVLILNNNISHNLGNGISLEG), 2455–2477 (VENNIISNNGIEENSGNGIYIGG), 2479–2501 (VENVSIFNNTIQYSDAQAILIQE), 2512–2542 (GTNISIINNTIQYNGLTVTIGNITAGITVGA), 2550–2582 (NGYIIIEGNKIINNNLCPNPTYGGKVGGIEVYG), 2589–2611 (SLEFNISKNIIANNSAYGILIGA), 2612–2633 (SKDINIINNTIFNNEKGITIPN), and 2638–2660 (PYNIIISKNSIYNNSLLGIDLDD).

It is found in the membrane. This is an uncharacterized protein from Methanocaldococcus jannaschii (strain ATCC 43067 / DSM 2661 / JAL-1 / JCM 10045 / NBRC 100440) (Methanococcus jannaschii).